Consider the following 395-residue polypeptide: Putative carbonic anhydrase 1 (395 aa).

A signal peptide spans 1–24; the sequence is MKLQGAGCVVAAVLGALFIVNVES. One can recognise an Alpha-carbonic anhydrase domain in the interval 42–365; it reads ISYDVRSTIG…LNDRPVFLVR (324 aa). The Zn(2+) site is built by His139, His141, and His165.

The protein belongs to the alpha-carbonic anhydrase family. It depends on Zn(2+) as a cofactor. As to expression, component of the acid-insoluble and acid-soluble organic matrix of calcified layers of the shell (at protein level).

The protein localises to the secreted. The enzyme catalyses hydrogencarbonate + H(+) = CO2 + H2O. Functionally, reversible hydration of carbon dioxide. The polypeptide is Putative carbonic anhydrase 1 (Lottia gigantea (Giant owl limpet)).